A 216-amino-acid polypeptide reads, in one-letter code: Probable methylthioribulose-1-phosphate dehydratase (216 aa).

Cys87 contributes to the substrate binding site. Zn(2+) contacts are provided by His105 and His107. Glu129 acts as the Proton donor/acceptor in catalysis.

Belongs to the aldolase class II family. MtnB subfamily. Requires Zn(2+) as cofactor.

The protein resides in the cytoplasm. It catalyses the reaction 5-(methylsulfanyl)-D-ribulose 1-phosphate = 5-methylsulfanyl-2,3-dioxopentyl phosphate + H2O. Its pathway is amino-acid biosynthesis; L-methionine biosynthesis via salvage pathway; L-methionine from S-methyl-5-thio-alpha-D-ribose 1-phosphate: step 2/6. Its function is as follows. Catalyzes the dehydration of methylthioribulose-1-phosphate (MTRu-1-P) into 2,3-diketo-5-methylthiopentyl-1-phosphate (DK-MTP-1-P). The chain is Probable methylthioribulose-1-phosphate dehydratase from Drosophila persimilis (Fruit fly).